Reading from the N-terminus, the 729-residue chain is Heterogeneous nuclear ribonucleoprotein M (729 aa).

Positions 1 to 13 (MAAGVEAAAEVAA) are enriched in low complexity. A disordered region spans residues 1–65 (MAAGVEAAAE…GGNRFEPYSN (65 aa)). A2 is subject to N-acetylalanine. K17 participates in a covalent cross-link: Glycyl lysine isopeptide (Lys-Gly) (interchain with G-Cter in SUMO2). Residue S29 is modified to Phosphoserine. Glycyl lysine isopeptide (Lys-Gly) (interchain with G-Cter in SUMO2) cross-links involve residues K37, K68, and K82. Positions 37-49 (KGEERPTQNEKRK) are enriched in basic and acidic residues. RRM domains follow at residues 70-148 (YRAF…EDPD) and 203-280 (STVF…MDER). Residue S85 is modified to Phosphoserine. Residues K87 and K126 each participate in a glycyl lysine isopeptide (Lys-Gly) (interchain with G-Cter in SUMO2) cross-link. K133 is subject to N6-acetyllysine; alternate. A Glycyl lysine isopeptide (Lys-Gly) (interchain with G-Cter in SUMO2); alternate cross-link involves residue K133. Glycyl lysine isopeptide (Lys-Gly) (interchain with G-Cter in SUMO2) cross-links involve residues K142 and K144. The residue at position 203 (S203) is a Phosphoserine. A Glycyl lysine isopeptide (Lys-Gly) (interchain with G-Cter in SUMO2) cross-link involves residue K220. Residue K276 is modified to N6-acetyllysine; alternate. K276 is covalently cross-linked (Glycyl lysine isopeptide (Lys-Gly) (interchain with G-Cter in SUMO2); alternate). Residues K284 and K344 each participate in a glycyl lysine isopeptide (Lys-Gly) (interchain with G-Cter in SUMO2) cross-link. Phosphoserine occurs at positions 364 and 376. Residues K380 and K387 each participate in a glycyl lysine isopeptide (Lys-Gly) (interchain with G-Cter in SUMO2) cross-link. S396 is subject to Phosphoserine. 4 repeat units span residues 399-404 (GIERMG), 406-411 (GIDRIS), 414-419 (GMERMG), and 425-430 (GMDRVG). The interval 399-607 (GIERMGPGID…ALGAGIERMG (209 aa)) is 27 X 6 AA repeats of [GEVSTPAN]-[ILMV]-[DE]-[RH]-[MLVI]-[GAV]. S431 bears the Phosphoserine mark. Tandem repeats lie at residues 432–437 (EIERMG), 439–444 (VMDRMG), and 445–450 (SVERMG). Residue S451 is modified to Phosphoserine. Tandem repeats lie at residues 452 to 457 (SIERMG), 460 to 465 (GLDHMA), 467 to 472 (SIERMG), and 474 to 479 (TMERIG). At S467 the chain carries Phosphoserine. S480 is subject to Phosphoserine. 16 repeat units span residues 481–486 (GVERMG), 492–497 (GLERMA), 499–504 (PIDRVG), 506–511 (TIERMG), 513–518 (GVERMG), 520–525 (AIERMG), 527–532 (SMDRMV), 539–544 (SLERMG), 546–551 (VMDRMA), 553–558 (GLERMG), 561–566 (NLERMG), 567–571 (LERMG), 574–579 (SLERMG), 580–584 (LERMG), 587–592 (SLERMG), and 602–607 (GIERMG). Position 495 is an omega-N-methylarginine (R495). Residue S527 is modified to Phosphoserine. S574 carries the phosphoserine modification. Position 587 is a phosphoserine (S587). A phosphoserine mark is found at S617, S632, and S636. K650 participates in a covalent cross-link: Glycyl lysine isopeptide (Lys-Gly) (interchain with G-Cter in SUMO2). The RRM 3 domain occupies 652-728 (CQIFVRNLPF…REIDVRIDRN (77 aa)). T664 carries the phosphothreonine modification. A Glycyl lysine isopeptide (Lys-Gly) (interchain with G-Cter in SUMO2) cross-link involves residue K666. An N6-acetyllysine modification is found at K671. Glycyl lysine isopeptide (Lys-Gly) (interchain with G-Cter in SUMO2) cross-links involve residues K684 and K691. K697 carries the post-translational modification N6-acetyllysine; alternate. K697 participates in a covalent cross-link: Glycyl lysine isopeptide (Lys-Gly) (interchain with G-Cter in SUMO2); alternate. K697 is covalently cross-linked (Glycyl lysine isopeptide (Lys-Gly) (interchain with G-Cter in SUMO1); alternate). A Phosphoserine modification is found at S700. K715 is covalently cross-linked (Glycyl lysine isopeptide (Lys-Gly) (interchain with G-Cter in SUMO2)).

Identified in the spliceosome C complex. Interacts with PPIA/CYPA. In terms of processing, sumoylated.

The protein resides in the nucleus. In terms of biological role, pre-mRNA binding protein in vivo, binds avidly to poly(G) and poly(U) RNA homopolymers in vitro. Involved in splicing. Acts as a receptor for carcinoembryonic antigen in Kupffer cells, may initiate a series of signaling events leading to tyrosine phosphorylation of proteins and induction of IL-1 alpha, IL-6, IL-10 and tumor necrosis factor alpha cytokines. This Mus musculus (Mouse) protein is Heterogeneous nuclear ribonucleoprotein M (Hnrnpm).